We begin with the raw amino-acid sequence, 170 residues long: VIP peptides (170 aa).

An N-terminal signal peptide occupies residues 1–20; the sequence is MDTRNKAQLLVLLTLLSVLF. Residues 21–79 constitute a propeptide that is removed on maturation; the sequence is SQTSAWPLYRAPSALRLGDRIPFEGANEPDQVSLKEDIDMLQNALAENDTPYYDVSRNA. Ser-76 is subject to Phosphoserine. Met-107 is modified (methionine amide). An Asparagine amide modification is found at Asn-152. A propeptide spanning residues 156 to 170 is cleaved from the precursor; it reads SSEGESPDFPEELEK.

This sequence belongs to the glucagon family.

The protein localises to the secreted. Its function is as follows. VIP is a neuropeptide involved in a diverse array of physiological processes through activating the PACAP subfamily of class B1 G protein-coupled receptors: VIP receptor 1 (VPR1) and VIP receptor 2 (VPR2). Abundantly expressed throughout the CNS and peripheral nervous systems where they primarily exert neuroprotective and immune modulatory roles. Also causes vasodilation, lowers arterial blood pressure, stimulates myocardial contractility, increases glycogenolysis and relaxes the smooth muscle of trachea, stomach and gall bladder. Functionally, PHM-27 and PHV-42 are two bioactive forms from proteolysis of the same precursor protein, that cause vasodilation. PHM-27 is a potent agonist of the calcitonin receptor CALCR, with similar efficacy as calcitonin. This chain is VIP peptides, found in Homo sapiens (Human).